The primary structure comprises 80 residues: MLSKILGIFKGKEKIEEKSNKIIEIDYNKCKNCLSCYRVCKNNVFAIKNNRVVVKNENNCTKCGECLKVCRYGAIILYDA.

4Fe-4S ferredoxin-type domains follow at residues 21–49 and 50–80; these read KIIE…AIKN and NRVV…LYDA. Cys-30, Cys-33, Cys-36, Cys-40, Cys-60, Cys-63, Cys-66, and Cys-70 together coordinate [4Fe-4S] cluster.

Requires [4Fe-4S] cluster as cofactor.

This is an uncharacterized protein from Methanocaldococcus jannaschii (strain ATCC 43067 / DSM 2661 / JAL-1 / JCM 10045 / NBRC 100440) (Methanococcus jannaschii).